We begin with the raw amino-acid sequence, 717 residues long: ATP-dependent zinc metalloprotease FtsH (717 aa).

Residues 1–7 are Cytoplasmic-facing; it reads MFKDKKM. Residues 8-28 traverse the membrane as a helical segment; sequence LKYIVIYSIIAFGILLTFNMV. The Extracellular portion of the chain corresponds to 29 to 109; the sequence is KDEMLYEKVD…VEFNVTKPEN (81 aa). Residues 110 to 130 form a helical membrane-spanning segment; the sequence is YQLLGLLMSWVFPLILIFFVG. Topologically, residues 131 to 717 are cytoplasmic; that stretch reads RMMFSKMNNK…SSTNNKVDGE (587 aa). 206-213 contacts ATP; the sequence is GPPGTGKT. H427 lines the Zn(2+) pocket. Residue E428 is part of the active site. Zn(2+)-binding residues include H431 and D504. The disordered stretch occupies residues 670 to 717; it reads KLARANNEANNDALDSSKENEEVKSNVNDGATEEKKDDSSTNNKVDGE. 2 stretches are compositionally biased toward basic and acidic residues: residues 684–693 and 701–717; these read DSSKENEEVK and TEEKKDDSSTNNKVDGE.

It in the central section; belongs to the AAA ATPase family. In the C-terminal section; belongs to the peptidase M41 family. As to quaternary structure, homohexamer. Zn(2+) serves as cofactor.

The protein resides in the cell membrane. Functionally, acts as a processive, ATP-dependent zinc metallopeptidase for both cytoplasmic and membrane proteins. Plays a role in the quality control of integral membrane proteins. The polypeptide is ATP-dependent zinc metalloprotease FtsH (Clostridium perfringens (strain ATCC 13124 / DSM 756 / JCM 1290 / NCIMB 6125 / NCTC 8237 / Type A)).